The sequence spans 223 residues: 2-C-methyl-D-erythritol 4-phosphate cytidylyltransferase (223 aa).

This sequence belongs to the IspD/TarI cytidylyltransferase family. IspD subfamily.

The enzyme catalyses 2-C-methyl-D-erythritol 4-phosphate + CTP + H(+) = 4-CDP-2-C-methyl-D-erythritol + diphosphate. It functions in the pathway isoprenoid biosynthesis; isopentenyl diphosphate biosynthesis via DXP pathway; isopentenyl diphosphate from 1-deoxy-D-xylulose 5-phosphate: step 2/6. Its function is as follows. Catalyzes the formation of 4-diphosphocytidyl-2-C-methyl-D-erythritol from CTP and 2-C-methyl-D-erythritol 4-phosphate (MEP). The protein is 2-C-methyl-D-erythritol 4-phosphate cytidylyltransferase of Synechococcus sp. (strain WH7803).